The following is a 318-amino-acid chain: MTQTGSARFEGDSWDLASSVGLTATMVAAARAVAGRAPGALVNDQFAEPLVRAVGVDFFVRMASGELDPDELAEDEANGLRRFADAMAIRTHYFDNFFLDATRAGIRQAVILASGLDSRAYRLRWPAGTIVFEVDQPQVIDFKTTTLAGLGAAPTTDRRTVAVDLRDDWPTALQKAGFDNAQRTAWIAEGLLGYLSAEAQDRLLDQITAQSVPGSQFATEVLRDINRLNEEELRGRMRRLAERFRRHGLDLDMSGLVYFGDRTDARTYLADHGWRTASASTTDLLAEHGLPPIDGDDAPFGEVIYVSAELKQKHQDTR.

S-adenosyl-L-methionine-binding positions include aspartate 135 and aspartate 164–leucine 165.

Belongs to the UPF0677 family.

Exhibits S-adenosyl-L-methionine-dependent methyltransferase activity. In Mycobacterium bovis (strain BCG / Pasteur 1173P2), this protein is Putative S-adenosyl-L-methionine-dependent methyltransferase BCG_0781c.